A 558-amino-acid chain; its full sequence is Protein OS-9 homolog (558 aa).

Residues 1–17 form the signal peptide; that stretch reads MLLKSLALIASSSLAAT. The N-linked (GlcNAc...) asparagine glycan is linked to Asn-68. The 127-residue stretch at 111–237 folds into the MRH domain; sequence GDCLFYEQGF…QVGTPRLCKD (127 aa). Cys-113 and Cys-126 are disulfide-bonded. A mannooligosaccharide derivative contacts are provided by Gln-133, Arg-197, Glu-219, and Tyr-225. Intrachain disulfides connect Cys-190–Cys-223 and Cys-205–Cys-235. 2 disordered regions span residues 435 to 508 and 539 to 558; these read SKKL…DEDE and KDLADKEDDDDDYEDYGLSD. Residues 441–466 are compositionally biased toward basic and acidic residues; sequence KKEAASTKREEAKKQVEASVEEKAVD. Polar residues predominate over residues 474–492; the sequence is DTVTSTQTFFRTQTLSTAE. Residues 543-558 show a composition bias toward acidic residues; the sequence is DKEDDDDDYEDYGLSD.

The protein belongs to the OS-9 family. In terms of assembly, interacts with missfolded ER lumenal proteins.

The protein resides in the endoplasmic reticulum membrane. In terms of biological role, lectin involved in the quality control of the secretory pathway. As a member of the endoplasmic reticulum-associated degradation lumenal (ERAD-L) surveillance system, targets misfolded endoplasmic reticulum lumenal glycoproteins for degradation. In Yarrowia lipolytica (strain CLIB 122 / E 150) (Yeast), this protein is Protein OS-9 homolog (YOS9).